Reading from the N-terminus, the 156-residue chain is Transcription elongation factor GreA (156 aa).

It belongs to the GreA/GreB family.

In terms of biological role, necessary for efficient RNA polymerase transcription elongation past template-encoded arresting sites. The arresting sites in DNA have the property of trapping a certain fraction of elongating RNA polymerases that pass through, resulting in locked ternary complexes. Cleavage of the nascent transcript by cleavage factors such as GreA or GreB allows the resumption of elongation from the new 3'terminus. GreA releases sequences of 2 to 3 nucleotides. In Thermomicrobium roseum (strain ATCC 27502 / DSM 5159 / P-2), this protein is Transcription elongation factor GreA.